Consider the following 506-residue polypeptide: Anaerobic nitric oxide reductase transcription regulator NorR (506 aa).

Position 57 is a 4-aspartylphosphate (D57). A Sigma-54 factor interaction domain is found at 187–416; it reads MIGLSPAMTQ…LEHAIHRAVV (230 aa). ATP contacts are provided by residues 215-222 and 278-287; these read GETGTGKE and ADNGTLFLDE. The segment at residues 481–500 is a DNA-binding region (H-T-H motif); sequence WAASARALETDVANLHRLAK.

It participates in nitrogen metabolism; nitric oxide reduction. Required for the expression of anaerobic nitric oxide (NO) reductase, acts as a transcriptional activator for at least the norVW operon. Activation also requires sigma-54. This Salmonella newport (strain SL254) protein is Anaerobic nitric oxide reductase transcription regulator NorR.